A 2540-amino-acid chain; its full sequence is MAVETRAELVGKRFLCVAVGDEARSERWESGRGWRSWRAGVIRAVSHRDSRNPDLAVYVEFDDLEWDKREWVKVYEDFSTFLVEYHLIWAKRNDPSQTQGSKSKQIQWPALTFKPLVERNIPSSVTAVEFLVDKQLDFLTEDSAFQPYQDDIDSLNPVLRDNPQLHEEVKVWVKEQKVQEIFMQGPYSLNGYRVRVYRQDSATQWFTGIITHHDLFTRTMIVMNDQVLEPQNVDPSMVQMTFLDDVVHSLLKGENIGITSRRRSRANQNVNAVHSHYTRAQANSPRPAMNSQAAVPKQNTHQQQQQRSIRPNKRKGSDSSIPDEEKMKEEKYDYISRGENPKGKNKHLMNKRRKPEEDEKKLNMKRLRTDNVSDFSESSDSENSNKRIIDNSSEQKPENELKNKNTSKINGEEGKPHNNEKAGEETLKNSQPPWDQIQEDKKHEEAEKRKSVDTQLQEDMIIHSSEQSTVSDHNSNDLLPQECNMDKTHTMELLPKEKFVSRPPTPKCVIDITNDTNLEKVAQENSSTFGLQTLQKMDPNVSDSKHSIANAKFLETAKKDSDQSWVSDVVKVDLTQSSVTNASSGNDHLNMEKEKYVSYISPLSAVSVMEDKLHKRSPPPETIKSKLNTSVDTHKIKSSPSPEVVKPKITHSPDSVKSKATYVNSQATGERRLANKIEHELSRCSFHPIPTRSSTLETTKSPLIIDKNEHFTVYRDPALIGSETGANHISPFLSQHPFPLHSSSHRTCLNPGTHHPALTPAPHLLAGSSSQTPLPTINTHPLTSGPHHAVHHPHLLPTVLPGVPTASLLGGHPRLESAHASSLSHLALAHQQQQQLLQHQSPHLLGQAHPSASYNQLGLYPIIWQYPNGTHAYSGLGLPSSKWVHPENAVNAEASLRRNSPSPWLHQPTPVTSADGIGLLSHIPVRPSSAEPHRPLKITAHSSPPLTKTLVDHHKEELERKAFMEPLRSVASTSAKNDLDLNRSQTGKDCHLHRHFVDPVLNQLQRPPQETGERLNKYKEEHRRILQESIDVAPFTTKIKGLEGERENYSRVASSSSSPKSHIIKQDMDVERSVSDLYKMKHSVPQSLPQSNYFTTLSNSVVNEPPRSYPSKEVSNIYGDKQSNALAAAAANPQTLTSFITSLSKPPPLIKHQPESEGLVGKIPEHLPHQIASHSVTTFRNDCRSPTHLTVSSTNTLRSMPALHRAPVFHPPIHHSLERKEGSYSSLSPPTLTPVMPVNAGGKVQESQKPPTLIPEPKDSQANFKSSSEQSLTEMWRPNNNLSKEKTEWHVEKSSGKLQAAMASVIVRPSSSTKTDSMPAMQLASKDRVSERSSAGAHKTDCLKLAEAGETGRIILPNVNSDSVHTKSEKNFQAVSQGSVPSSVMSAVNTMCNTKTDVITSAADTTSVSSWGGSEVISSLSNTILASTSSECVSSKSVSQPVAQKQECKVSTTAPVTLASSKTGSVVQPSSGFSGTTDFIHLKKHKAALAAAQYKSSNASETEPNAIKNQTLSASLPLDSTVICSTINKANSVGNGQASQTSQPNYHTKLKKAWLTRHSEEDKNTNKMENSGNSVSEIIKPCSVNLIASTSSDIQNSVDSKIIVDKYVKDDKVNRRKAKRTYESGSESGDSDESESKSEQRTKRQPKPTYKKKQNDLQKRKGEIEEDLKPNGVLSRSAKERSKLKLQSNSNTGIPRSVLKDWRKVKKLKQTGESFLQDDSCCEIGPNLQKCRECRLIRSKKGEEPAHSPVFCRFYYFRRLSFSKNGVVRIDGFSSPDQYDDEAMSLWTHENFEDDELDIETSKYILDIIGDKFCQLVTSEKTALSWVKKDAKIAWKRAVRGVREMCDACEATLFNIHWVCQKCGFVVCLDCYKAKERKSSRDKELYAWMKCVKGQPHDHKHLMPTQIIPGSVLTDLLDAMHTLREKYGIKSHCHCTNKQNLQVGNFPTMNGVSQVLQNVLNHSNKISLCMPESQQQNTPPKSEKNGGSSPESDVGTDNKLTPPESQSPLHWLADLAEQKAREEKKENKELTLENQIKEEREQDNSESPNGRTSPLVSQNNEQGSTLRDLLTTTAGKLRVGSTDAGIAFAPVYSMGAPSSKSGRTMPNILDDIIASVVENKIPPSKTSKINVKPELKEEPEESIISAVDENNKLYSDIPHSWICEKHILWLKDYKNSSNWKLFKECWKQGQPAVVSGVHKKMNISLWKAESISLDFGDHQADLLNCKDSIISNANVKEFWDGFEEVSKRQKNKSGETVVLKLKDWPSGEDFKTMMPARYEDLLKSLPLPEYCNPEGKFNLASHLPGFFVRPDLGPRLCSAYGVVAAKDHDIGTTNLHIEVSDVVNILVYVGIAKGNGILSKAGILKKFEEEDLDDILRKRLKDSSEIPGALWHIYAGKDVDKIREFLQKISKEQGLEVLPEHDPIRDQSWYVNKKLRQRLLEEYGVRTCTLIQFLGDAIVLPAGALHQVQNFHSCIQVTEDFVSPEHLVESFHLTQELRLLKEEINYDDKLQVKNILYHAVKEMVRALKIHEDEVEDMEEN.

Polar residues predominate over residues 278-309 (TRAQANSPRPAMNSQAAVPKQNTHQQQQQRSI). The disordered stretch occupies residues 278-478 (TRAQANSPRP…TVSDHNSNDL (201 aa)). Residues S317 and S320 each carry the phosphoserine modification. Basic and acidic residues predominate over residues 323 to 342 (DEEKMKEEKYDYISRGENPK). Residues 343 to 353 (GKNKHLMNKRR) are compositionally biased toward basic residues. Positions 354–371 (KPEEDEKKLNMKRLRTDN) are enriched in basic and acidic residues. A phosphoserine mark is found at S373 and S376. A compositionally biased stretch (low complexity) spans 373–382 (SDFSESSDSE). Basic and acidic residues-rich tracts occupy residues 383–403 (NSNKRIIDNSSEQKPENELKN), 410–427 (NGEEGKPHNNEKAGEETL), and 438–452 (QEDKKHEEAEKRKSV). Over residues 464-478 (SSEQSTVSDHNSNDL) the composition is skewed to polar residues. Residues S475 and S501 each carry the phosphoserine modification. At T505 the chain carries Phosphothreonine. Phosphoserine is present on residues S601, S617, S638, S639, S641, S652, and S943. The disordered stretch occupies residues 631–656 (VDTHKIKSSPSPEVVKPKITHSPDSV). 2 disordered regions span residues 1242-1263 (GKVQESQKPPTLIPEPKDSQAN) and 1614-1692 (NRRK…NSNT). Basic residues predominate over residues 1643–1652 (KRQPKPTYKK). The span at 1653 to 1669 (KQNDLQKRKGEIEEDLK) shows a compositional bias: basic and acidic residues. The segment at 1846-1871 (CDACEATLFNIHWVCQKCGFVVCLDC) adopts a C6-type zinc-finger fold. Positions 1971–1991 (PESQQQNTPPKSEKNGGSSPE) are enriched in polar residues. The disordered stretch occupies residues 1971–2064 (PESQQQNTPP…LVSQNNEQGS (94 aa)). The residue at position 1989 (S1989) is a Phosphoserine. The segment covering 2016–2043 (AEQKAREEKKENKELTLENQIKEEREQD) has biased composition (basic and acidic residues). A compositionally biased stretch (polar residues) spans 2045 to 2064 (SESPNGRTSPLVSQNNEQGS). The short motif at 2066 to 2070 (LRDLL) is the LXXLL motif element. Glycyl lysine isopeptide (Lys-Gly) (interchain with G-Cter in SUMO2) cross-links involve residues K2132 and K2136. Positions 2274-2498 (MPARYEDLLK…ESFHLTQELR (225 aa)) constitute a JmjC domain. The Fe cation site is built by H2336, E2338, and H2466.

It belongs to the JHDM2 histone demethylase family. Interacts specifically with the ligand-binding domain of the thyroid receptor (TR). Requires the presence of thyroid hormone for its interaction. Fe(2+) is required as a cofactor.

It is found in the nucleus. Probable histone demethylase that specifically demethylates 'Lys-9' of histone H3, thereby playing a central role in histone code. Demethylation of Lys residue generates formaldehyde and succinate. May be involved in hormone-dependent transcriptional activation, by participating in recruitment to androgen-receptor target genes. This is Probable JmjC domain-containing histone demethylation protein 2C (JMJD1C) from Homo sapiens (Human).